Reading from the N-terminus, the 1207-residue chain is AP-3 complex subunit delta-1 (1207 aa).

The residue at position 2 (alanine 2) is an N-acetylalanine. 9 HEAT repeats span residues 34-71, 142-179, 180-216, 218-254, 257-296, 298-336, 337-373, 375-409, and 521-558; these read KYIS…LGYD, DLAR…KYPE, SLRP…RNPK, YLSL…LEPR, KKLI…GMPN, SASI…THPK, SVQA…KKNL, EIVK…QSNY, and VYVQ…ERLP. Disordered regions lie at residues 630–695 and 731–970; these read PLSD…RYQD and RRHR…EEPL. Residues serine 632, serine 634, and serine 636 each carry the phosphoserine modification. Basic and acidic residues predominate over residues 648–675; sequence EEQRHTKPRAPEADEQELARRREARRQE. Residues 659–679 adopt a coiled-coil conformation; the sequence is EADEQELARRREARRQEQANN. Residue serine 688 is modified to Phosphoserine. Residues 725–752 adopt a coiled-coil conformation; sequence VKLEEERRHRQRLEKDKRKKKKRERERR. Residues 731–740 are compositionally biased toward basic and acidic residues; that stretch reads RRHRQRLEKD. Over residues 741–759 the composition is skewed to basic residues; the sequence is KRKKKKRERERRGTRRHSS. Serine 758 and serine 759 each carry phosphoserine. Threonine 762 is modified (phosphothreonine). Serine 764, serine 788, and serine 829 each carry phosphoserine. Residues 777–794 are compositionally biased toward acidic residues; sequence VTEEMPENALPSDEDDKD. A compositionally biased stretch (basic and acidic residues) spans 795–840; it reads PNDPYRALDIDLDKPLADSEKLPVQKHRNAETSKSPEKEDVPLVEK. The span at 841–854 shows a compositional bias: basic residues; sequence KSKKPKKKEKKHKE. Residues 846–870 are a coiled coil; it reads KKKEKKHKEKEREKKKKEVEKGEDL. 2 stretches are compositionally biased toward basic and acidic residues: residues 855–869 and 899–908; these read KERE…KGED and EGQEEPRGEE. Over residues 923–933 the composition is skewed to basic residues; that stretch reads PSKHKKKKHKK. Acidic residues predominate over residues 952 to 969; sequence ADEEAAEPVENGTLEEEP.

It belongs to the adaptor complexes large subunit family. AP-3 associates with the BLOC-1 complex. Adaptor protein complex 3 (AP-3) is a heterotetramer composed of two large adaptins (delta-type subunit AP3D1 and beta-type subunit AP3B1 or AP3B2), a medium adaptin (mu-type subunit AP3M1 or AP3M2) and a small adaptin (sigma-type subunit APS1 or AP3S2). Interacts with SLC30A2. Interacts with CLN3 (via dileucine motif); this interaction facilitates lysosomal targeting.

It is found in the cytoplasm. The protein localises to the golgi apparatus membrane. Its function is as follows. Part of the AP-3 complex, an adaptor-related complex which is not clathrin-associated. The complex is associated with the Golgi region as well as more peripheral structures. It facilitates the budding of vesicles from the Golgi membrane and may be directly involved in trafficking to lysosomes. Involved in process of CD8+ T-cell and NK cell degranulation. In concert with the BLOC-1 complex, AP-3 is required to target cargos into vesicles assembled at cell bodies for delivery into neurites and nerve terminals. This Bos taurus (Bovine) protein is AP-3 complex subunit delta-1 (AP3D1).